Reading from the N-terminus, the 372-residue chain is GDSL esterase/lipase At5g45910 (372 aa).

An N-terminal signal peptide occupies residues 1 to 19 (MRINMLFIVAFSFLVSVRS). Residue serine 37 is the Nucleophile of the active site. Residues asparagine 66, asparagine 101, and asparagine 137 are each glycosylated (N-linked (GlcNAc...) asparagine). Catalysis depends on residues aspartate 345 and histidine 348.

The protein belongs to the 'GDSL' lipolytic enzyme family.

The protein resides in the secreted. In Arabidopsis thaliana (Mouse-ear cress), this protein is GDSL esterase/lipase At5g45910.